Consider the following 137-residue polypeptide: Probable glycine cleavage system H protein 1 (137 aa).

The Lipoyl-binding domain maps to 31–113 (VAVIGITDYA…YGEGWIFKLK (83 aa)). N6-lipoyllysine is present on Lys-72.

The protein belongs to the GcvH family. In terms of assembly, the glycine cleavage system is composed of four proteins: P, T, L and H. (R)-lipoate serves as cofactor.

The glycine cleavage system catalyzes the degradation of glycine. The H protein shuttles the methylamine group of glycine from the P protein to the T protein. This is Probable glycine cleavage system H protein 1 from Saccharolobus solfataricus (strain ATCC 35092 / DSM 1617 / JCM 11322 / P2) (Sulfolobus solfataricus).